The sequence spans 146 residues: Hemoglobin subunit beta-A/B (146 aa).

An N-acetylserine; in variant beta-B modification is found at glycine 1. The region spanning 2–146 (FLTAEEKGLV…VANALAHKYH (145 aa)) is the Globin domain. The residue at position 44 (serine 44) is a Phosphoserine. An N6-acetyllysine modification is found at lysine 59. Residue histidine 63 participates in heme b binding. Lysine 82 carries the N6-acetyllysine modification. Histidine 92 contributes to the heme b binding site. S-nitrosocysteine is present on cysteine 93. Position 144 is an N6-acetyllysine (lysine 144).

It belongs to the globin family. Heterotetramer of two alpha chains and two beta chains. In terms of tissue distribution, red blood cells.

Its function is as follows. Involved in oxygen transport from the lung to the various peripheral tissues. In Felis catus (Cat), this protein is Hemoglobin subunit beta-A/B (HBB).